The chain runs to 476 residues: UDP-N-acetylmuramate--L-alanine ligase (476 aa).

An ATP-binding site is contributed by 112–118; sequence GTHGKTT.

Belongs to the MurCDEF family.

The protein resides in the cytoplasm. It carries out the reaction UDP-N-acetyl-alpha-D-muramate + L-alanine + ATP = UDP-N-acetyl-alpha-D-muramoyl-L-alanine + ADP + phosphate + H(+). The protein operates within cell wall biogenesis; peptidoglycan biosynthesis. Functionally, cell wall formation. This Magnetococcus marinus (strain ATCC BAA-1437 / JCM 17883 / MC-1) protein is UDP-N-acetylmuramate--L-alanine ligase.